The chain runs to 144 residues: Transcription antitermination protein NusB (144 aa).

Belongs to the NusB family.

Involved in transcription antitermination. Required for transcription of ribosomal RNA (rRNA) genes. Binds specifically to the boxA antiterminator sequence of the ribosomal RNA (rrn) operons. This Streptococcus thermophilus (strain CNRZ 1066) protein is Transcription antitermination protein NusB.